Here is a 141-residue protein sequence, read N- to C-terminus: Nucleoside diphosphate kinase (141 aa).

Positions 9, 57, 85, 91, 102, and 112 each coordinate ATP. Residue His115 is the Pros-phosphohistidine intermediate of the active site.

This sequence belongs to the NDK family. As to quaternary structure, homotetramer. Mg(2+) serves as cofactor.

It is found in the cytoplasm. It catalyses the reaction a 2'-deoxyribonucleoside 5'-diphosphate + ATP = a 2'-deoxyribonucleoside 5'-triphosphate + ADP. It carries out the reaction a ribonucleoside 5'-diphosphate + ATP = a ribonucleoside 5'-triphosphate + ADP. Functionally, major role in the synthesis of nucleoside triphosphates other than ATP. The ATP gamma phosphate is transferred to the NDP beta phosphate via a ping-pong mechanism, using a phosphorylated active-site intermediate. This chain is Nucleoside diphosphate kinase, found in Chlamydia caviae (strain ATCC VR-813 / DSM 19441 / 03DC25 / GPIC) (Chlamydophila caviae).